The sequence spans 174 residues: MAAANKGNKPRVRSIRFAAGHDAEGSHSHVHFDEKLHDSVVMVTQESDSSFLVKVGFLKILHRYEITFTLPPVHRLSKDVREAPVPSLHLKLLSVVPVPEGYSVKCEYSAHKEGVLKEEILLACEGGTGTCVRVTVQARVMDRHHGTPMLLDGVKCVGAELEYDSEHSDWHGFD.

A2 bears the N-acetylalanine mark. T147 is subject to Phosphothreonine.

This sequence belongs to the ADISSP family.

Its subcellular location is the secreted. Its function is as follows. Adipocyte-secreted protein (adipokine) that acts as a key regulator for white adipose tissue (WAT) thermogenesis and glucose homeostasis at least in part through activation of protein kinase A (PKA). The polypeptide is Adipose-secreted signaling protein (Homo sapiens (Human)).